Reading from the N-terminus, the 394-residue chain is NAD(P)H-quinone oxidoreductase subunit H (394 aa).

This sequence belongs to the complex I 49 kDa subunit family. NDH-1 can be composed of about 15 different subunits; different subcomplexes with different compositions have been identified which probably have different functions.

The protein localises to the cellular thylakoid membrane. It carries out the reaction a plastoquinone + NADH + (n+1) H(+)(in) = a plastoquinol + NAD(+) + n H(+)(out). It catalyses the reaction a plastoquinone + NADPH + (n+1) H(+)(in) = a plastoquinol + NADP(+) + n H(+)(out). NDH-1 shuttles electrons from an unknown electron donor, via FMN and iron-sulfur (Fe-S) centers, to quinones in the respiratory and/or the photosynthetic chain. The immediate electron acceptor for the enzyme in this species is believed to be plastoquinone. Couples the redox reaction to proton translocation, and thus conserves the redox energy in a proton gradient. Cyanobacterial NDH-1 also plays a role in inorganic carbon-concentration. The chain is NAD(P)H-quinone oxidoreductase subunit H from Trichodesmium erythraeum (strain IMS101).